A 547-amino-acid chain; its full sequence is Inositol-tetrakisphosphate 1-kinase 6 (547 aa).

Lys-263 is a binding site for 1D-myo-inositol 1,3,4-trisphosphate. Positions 317 and 370 each coordinate ATP. An ATP-grasp domain is found at 327–539 (LEGLSAEGRP…FWDAIKQSYE (213 aa)). 1D-myo-inositol 1,3,4-trisphosphate-binding residues include His-381 and Lys-415. Residues 404-415 (QEYIDHGSKIFK), Ser-430, and Ser-450 contribute to the ATP site. Mg(2+) is bound by residues Asp-497, Asp-511, and Asn-513. Residues Asn-513 and Ser-517 each coordinate 1D-myo-inositol 1,3,4-trisphosphate.

This sequence belongs to the ITPK1 family. In terms of assembly, monomer. It depends on Mg(2+) as a cofactor.

It catalyses the reaction 1D-myo-inositol 3,4,5,6-tetrakisphosphate + ATP = 1D-myo-inositol 1,3,4,5,6-pentakisphosphate + ADP + H(+). The enzyme catalyses 1D-myo-inositol 1,3,4-trisphosphate + ATP = 1D-myo-inositol 1,3,4,5-tetrakisphosphate + ADP + H(+). It carries out the reaction 1D-myo-inositol 1,3,4-trisphosphate + ATP = 1D-myo-inositol 1,3,4,6-tetrakisphosphate + ADP + H(+). In terms of biological role, kinase that can phosphorylate various inositol polyphosphate such as Ins(3,4,5,6)P4 or Ins(1,3,4)P3 and participates in phytic acid biosynthesis in developing seeds. Phytic acid is the primary storage form of phosphorus in cereal grains and other plant seeds. This chain is Inositol-tetrakisphosphate 1-kinase 6, found in Oryza sativa subsp. indica (Rice).